The sequence spans 427 residues: 3-phosphoshikimate 1-carboxyvinyltransferase (427 aa).

3-phosphoshikimate is bound by residues lysine 22, serine 23, and arginine 27. Lysine 22 is a phosphoenolpyruvate binding site. Phosphoenolpyruvate is bound by residues glycine 97 and arginine 125. 3-phosphoshikimate is bound by residues serine 171, serine 172, glutamine 173, serine 199, aspartate 315, asparagine 338, and lysine 342. Glutamine 173 provides a ligand contact to phosphoenolpyruvate. The Proton acceptor role is filled by aspartate 315. Phosphoenolpyruvate-binding residues include arginine 346, arginine 388, and lysine 413.

Belongs to the EPSP synthase family. In terms of assembly, monomer.

The protein localises to the cytoplasm. It catalyses the reaction 3-phosphoshikimate + phosphoenolpyruvate = 5-O-(1-carboxyvinyl)-3-phosphoshikimate + phosphate. It functions in the pathway metabolic intermediate biosynthesis; chorismate biosynthesis; chorismate from D-erythrose 4-phosphate and phosphoenolpyruvate: step 6/7. Catalyzes the transfer of the enolpyruvyl moiety of phosphoenolpyruvate (PEP) to the 5-hydroxyl of shikimate-3-phosphate (S3P) to produce enolpyruvyl shikimate-3-phosphate and inorganic phosphate. This Aliivibrio salmonicida (strain LFI1238) (Vibrio salmonicida (strain LFI1238)) protein is 3-phosphoshikimate 1-carboxyvinyltransferase.